Here is a 97-residue protein sequence, read N- to C-terminus: Mapk-regulated corepressor-interacting protein 1 (97 aa).

The segment at 1–30 (MTSSPVSRVVYNGKRNSSHRSPPNSSEIFT) is disordered. The residue at position 21 (serine 21) is a Phosphoserine. At threonine 30 the chain carries Phosphothreonine. The residue at position 41 (tyrosine 41) is a Phosphotyrosine. The interval 77 to 97 (TFRPIDLSDLKRRNTQDAKKS) is disordered. The short motif at 80 to 84 (PIDLS) is the PXDLS motif element. The span at 82–97 (DLSDLKRRNTQDAKKS) shows a compositional bias: basic and acidic residues.

This sequence belongs to the MCRIP family. Interacts (unphosphorylated form, via the PXDLS motif) with CTBP1, competitively inhibiting CTBP-ZEB1 interaction. Interacts with CTBP2. Interacts with MCRIP2. Interacts with DDX6. In terms of processing, phosphorylation by MAPK3/1 (ERK1/2) regulates MCRIP1 binding to CTBP(s).

The protein resides in the nucleus. It localises to the cytoplasm. It is found in the stress granule. Its function is as follows. The phosphorylation status of MCRIP1 functions as a molecular switch to regulate epithelial-mesenchymal transition. Unphosphorylated MCRIP1 binds to and inhibits the transcriptional corepressor CTBP(s). When phosphorylated by MAPK/ERK, MCRIP1 releases CTBP(s) resulting in transcriptional silencing of the E-cadherin gene and induction of epithelial-mesenchymal transition. The sequence is that of Mapk-regulated corepressor-interacting protein 1 (MCRIP1) from Bos taurus (Bovine).